The sequence spans 1414 residues: DNA-directed RNA polymerase subunit beta' (1414 aa).

Residues C70, C72, C85, and C88 each contribute to the Zn(2+) site. D460, D462, and D464 together coordinate Mg(2+). Residues C815, C889, C896, and C899 each coordinate Zn(2+). A disordered region spans residues 1395-1414 (EAEAQFADVSSTPDSDTDAS).

Belongs to the RNA polymerase beta' chain family. In terms of assembly, the RNAP catalytic core consists of 2 alpha, 1 beta, 1 beta' and 1 omega subunit. When a sigma factor is associated with the core the holoenzyme is formed, which can initiate transcription. Requires Mg(2+) as cofactor. It depends on Zn(2+) as a cofactor.

It catalyses the reaction RNA(n) + a ribonucleoside 5'-triphosphate = RNA(n+1) + diphosphate. Functionally, DNA-dependent RNA polymerase catalyzes the transcription of DNA into RNA using the four ribonucleoside triphosphates as substrates. This is DNA-directed RNA polymerase subunit beta' from Janthinobacterium sp. (strain Marseille) (Minibacterium massiliensis).